Reading from the N-terminus, the 325-residue chain is MLTTSSSTMLGKYGWQILRRLASKSWEHTRQRKKPSGAGSRVLTDAREVFEFNAWDHVQWDEEQELAAKAAVAKNSTSKMEAEQKERFQTDAPKFWDSFYGIHDNRFFKDRHWLFTEFPELAPLAADSAVLQPRSIFELGCGVGNTILPLLQYSSEPQLKVFGCDFSARAIEILRSQRQFDEKRCEVFVMDATLDHWQVPFEENSQDIIVMIFVLSAIEPKKMQRVLDNCYRYLRPGGLLLFRDYGRYDLAQLRFKSGKCMEDNFYVRGDGTMVYFFTEEELRGMMTQAGLQEEQLIVDRRLQVNRCRGLKMYRVWIQTKFRKPL.

2 residues coordinate S-adenosyl-L-methionine: W96 and Y100. Positions 100, 112, 138, 140, 165, 191, and 212 each coordinate S-adenosyl-L-homocysteine. 4 residues coordinate S-adenosyl-L-methionine: G140, D165, D191, and I212.

This sequence belongs to the methyltransferase superfamily. METL family. In terms of assembly, interacts with Psn. In terms of tissue distribution, widely expressed. Expressed in ovaries, head, thorax and abdomen of adult flies, and in the CNS of third instar larvae. Isoform 2 is predominantly expressed in larvae and in adult tissues that have been tested.

Its function is as follows. Probable methyltransferase. The protein is tRNA N(3)-methylcytidine methyltransferase Mettl2 of Drosophila melanogaster (Fruit fly).